The sequence spans 206 residues: LexA repressor (206 aa).

Residues 28–48 (RAEIATRLGFKSANAAEEHLK) constitute a DNA-binding region (H-T-H motif). Active-site for autocatalytic cleavage activity residues include Ser123 and Lys160.

Belongs to the peptidase S24 family. In terms of assembly, homodimer.

The enzyme catalyses Hydrolysis of Ala-|-Gly bond in repressor LexA.. Functionally, represses a number of genes involved in the response to DNA damage (SOS response), including recA and lexA. In the presence of single-stranded DNA, RecA interacts with LexA causing an autocatalytic cleavage which disrupts the DNA-binding part of LexA, leading to derepression of the SOS regulon and eventually DNA repair. This Shewanella putrefaciens (strain CN-32 / ATCC BAA-453) protein is LexA repressor.